We begin with the raw amino-acid sequence, 118 residues long: Aspartate 1-decarboxylase (118 aa).

Ser25 (schiff-base intermediate with substrate; via pyruvic acid) is an active-site residue. Ser25 is subject to Pyruvic acid (Ser). Position 57 (Thr57) interacts with substrate. The active-site Proton donor is Tyr58. 73 to 75 provides a ligand contact to substrate; it reads GAA.

It belongs to the PanD family. Heterooctamer of four alpha and four beta subunits. Pyruvate serves as cofactor. In terms of processing, is synthesized initially as an inactive proenzyme, which is activated by self-cleavage at a specific serine bond to produce a beta-subunit with a hydroxyl group at its C-terminus and an alpha-subunit with a pyruvoyl group at its N-terminus.

The protein resides in the cytoplasm. The enzyme catalyses L-aspartate + H(+) = beta-alanine + CO2. The protein operates within cofactor biosynthesis; (R)-pantothenate biosynthesis; beta-alanine from L-aspartate: step 1/1. Catalyzes the pyruvoyl-dependent decarboxylation of aspartate to produce beta-alanine. This chain is Aspartate 1-decarboxylase, found in Syntrophomonas wolfei subsp. wolfei (strain DSM 2245B / Goettingen).